Consider the following 147-residue polypeptide: UPF0306 protein YE0465 (147 aa).

It belongs to the UPF0306 family.

This chain is UPF0306 protein YE0465, found in Yersinia enterocolitica serotype O:8 / biotype 1B (strain NCTC 13174 / 8081).